The chain runs to 147 residues: Endoribonuclease YbeY (147 aa).

Histidine 109, histidine 113, and histidine 119 together coordinate Zn(2+).

The protein belongs to the endoribonuclease YbeY family. Zn(2+) serves as cofactor.

It localises to the cytoplasm. Functionally, single strand-specific metallo-endoribonuclease involved in late-stage 70S ribosome quality control and in maturation of the 3' terminus of the 16S rRNA. This is Endoribonuclease YbeY from Thiobacillus denitrificans (strain ATCC 25259 / T1).